A 151-amino-acid chain; its full sequence is UPF0735 ACT domain-containing protein SERP1207 (151 aa).

The 76-residue stretch at 74–149 (TLILYVNDIV…HVTKVDLISM (76 aa)) folds into the ACT domain.

This sequence belongs to the UPF0735 family.

This is UPF0735 ACT domain-containing protein SERP1207 from Staphylococcus epidermidis (strain ATCC 35984 / DSM 28319 / BCRC 17069 / CCUG 31568 / BM 3577 / RP62A).